The chain runs to 132 residues: Small ribosomal subunit protein uS19 (132 aa).

The protein belongs to the universal ribosomal protein uS19 family.

Functionally, protein S19 forms a complex with S13 that binds strongly to the 16S ribosomal RNA. This is Small ribosomal subunit protein uS19 (rps19) from Pyrococcus horikoshii (strain ATCC 700860 / DSM 12428 / JCM 9974 / NBRC 100139 / OT-3).